Reading from the N-terminus, the 995-residue chain is Integrator complex subunit 8 (995 aa).

T18 carries the post-translational modification Phosphothreonine. The WFEF motif motif lies at 24–29 (WFEFLL). TPR repeat units follow at residues 250-288 (CQVC…IAEI), 320-356 (SQQL…SLPV), 570-603 (VYIL…VTEF), and 833-866 (HSWL…CSDF).

The protein belongs to the Integrator subunit 8 family. As to quaternary structure, component of the Integrator complex, composed of core subunits INTS1, INTS2, INTS3, INTS4, INTS5, INTS6, INTS7, INTS8, INTS9/RC74, INTS10, INTS11/CPSF3L, INTS12, INTS13, INTS14 and INTS15. The core complex associates with protein phosphatase 2A subunits PPP2CA and PPP2R1A, to form the Integrator-PP2A (INTAC) complex.

It localises to the nucleus. It is found in the chromosome. Component of the integrator complex, a multiprotein complex that terminates RNA polymerase II (Pol II) transcription in the promoter-proximal region of genes. The integrator complex provides a quality checkpoint during transcription elongation by driving premature transcription termination of transcripts that are unfavorably configured for transcriptional elongation: the complex terminates transcription by (1) catalyzing dephosphorylation of the C-terminal domain (CTD) of Pol II subunit POLR2A/RPB1 and SUPT5H/SPT5, (2) degrading the exiting nascent RNA transcript via endonuclease activity and (3) promoting the release of Pol II from bound DNA. The integrator complex is also involved in terminating the synthesis of non-coding Pol II transcripts, such as enhancer RNAs (eRNAs), small nuclear RNAs (snRNAs), telomerase RNAs and long non-coding RNAs (lncRNAs). Within the integrator complex, INTS8 is required for the recruitment of protein phosphatase 2A (PP2A) to transcription pause-release checkpoint. The polypeptide is Integrator complex subunit 8 (Homo sapiens (Human)).